The chain runs to 513 residues: Xylose import ATP-binding protein XylG (513 aa).

ABC transporter domains lie at 5-242 (LEMK…VGRE) and 259-505 (LRIE…LRSE). 37–44 (GENGSGKS) provides a ligand contact to ATP.

It belongs to the ABC transporter superfamily. Xylose importer (TC 3.A.1.2.4) family. As to quaternary structure, the complex is composed of two ATP-binding proteins (XylG), two transmembrane proteins (XylH) and a solute-binding protein (XylF).

It is found in the cell inner membrane. The enzyme catalyses D-xylose(out) + ATP + H2O = D-xylose(in) + ADP + phosphate + H(+). Its function is as follows. Part of the ABC transporter complex XylFGH involved in xylose import. Responsible for energy coupling to the transport system. This is Xylose import ATP-binding protein XylG from Escherichia coli (strain UTI89 / UPEC).